Consider the following 321-residue polypeptide: MEKNRKKQIVVLSIALVCIFILVFSLFHKSATKDSANPPLTNVLTDSISQIVSACPGEIGVAVIVNNRDTVKVNNKSVYPMMSVFKVHQALALCNDFDNKGISLDTLVNINRDKLDPKTWSPMLKDYSGPVISLTVRDLLRYTLTQSDNNASNLMFKDMVNVAQTDSFIATLIPRSSFQIAYTEEEMSADHNKAYSNYTSPLGAAMLMNRLFTEGLIDDEKQSFIKNTLKECKTGVDRIAAPLLDKEGVVIAHKTGSGYVNENGVLAAHNDVAYICLPNNISYTLAVFVKDFKGNKSQASQYVAHISAVVYSLLMQTSVKS.

The signal sequence occupies residues 1–30 (MEKNRKKQIVVLSIALVCIFILVFSLFHKS). Catalysis depends on Ser83, which acts as the Acyl-ester intermediate. 233-235 (KTG) provides a ligand contact to substrate.

Belongs to the class-A beta-lactamase family.

It carries out the reaction a beta-lactam + H2O = a substituted beta-amino acid. With respect to regulation, inhibited by clavulanic acid. Its function is as follows. Can hydrolyze cephalosporins, penicillins and also cefoxitin; but at a slow rate. The chain is Beta-lactamase (cfxA) from Phocaeicola vulgatus (Bacteroides vulgatus).